A 395-amino-acid polypeptide reads, in one-letter code: Vacuolar protease A (395 aa).

Positions methionine 1–alanine 18 are cleaved as a signal peptide. Residues lysine 19–glutamate 72 constitute a propeptide, activation peptide. Residues tyrosine 87–alanine 392 form the Peptidase A1 domain. The active site involves aspartate 105. The cysteines at positions 118 and 123 are disulfide-linked. Residue asparagine 140 is glycosylated (N-linked (GlcNAc...) asparagine). Residue aspartate 289 is part of the active site. Cysteines 318 and 351 form a disulfide. Asparagine 335 carries an N-linked (GlcNAc...) asparagine glycan.

It belongs to the peptidase A1 family.

The protein localises to the vacuole lumen. Its subcellular location is the secreted. The catalysed reaction is Hydrolysis of proteins with broad specificity for peptide bonds. Cleaves -Leu-Leu-|-Val-Tyr- bond in a synthetic substrate. Does not act on esters of Tyr or Arg.. In terms of biological role, vacuolar aspartic endopeptidase which is probably also secreted and contributes to virulence. In Arthroderma otae (strain ATCC MYA-4605 / CBS 113480) (Microsporum canis), this protein is Vacuolar protease A (PEP2).